A 391-amino-acid chain; its full sequence is Cell cycle checkpoint control protein RAD9A (391 aa).

The residue at position 28 (tyrosine 28) is a Phosphotyrosine. The segment at 51 to 91 (FLFAPLFFQQYQAATPGQDLLRCKILMKSFLSVFRSLAMLE) is possesses 3'-5' exonuclease activity. Residues 266 to 391 (SDTDSHSQDL…VLAEDSEGEG (126 aa)) are sufficient for interaction with ABL1. Residues 268–282 (TDSHSQDLGSPERHQ) show a composition bias toward basic and acidic residues. 2 disordered regions span residues 268-301 (TDSH…FAND) and 319-391 (SRVL…EGEG). Residues serine 272, serine 277, and serine 328 each carry the phosphoserine modification. The residue at position 341 (serine 341) is a Phosphoserine; by CK2. Serine 375 and serine 380 each carry phosphoserine. Serine 387 is subject to Phosphoserine; by CK2.

This sequence belongs to the rad9 family. In terms of assembly, component of the toroidal 9-1-1 (RAD9-RAD1-HUS1) complex, composed of RAD9A, RAD1 and HUS1. The 9-1-1 complex associates with LIG1, POLB, FEN1, RAD17, HDAC1, RPA1 and RPA2. The 9-1-1 complex associates with the RAD17-RFC complex. RAD9A interacts with BCL2L1, FEN1, RAD9B, ABL1, RPA1, ATAD5 and RPA2. Interacts with DNAJC7. Interacts (when phosphorylated) with TOPBP1. Constitutively phosphorylated on serine and threonine amino acids in absence of DNA damage. Hyperphosphorylated by PRKCD and ABL1 upon DNA damage. Its phosphorylation by PRKCD may be required for the formation of the 9-1-1 complex. Phosphorylated at Ser-341 and Ser-387 by CK2, promoting interaction with TOPBP1.

Its subcellular location is the nucleus. It catalyses the reaction Exonucleolytic cleavage in the 3'- to 5'-direction to yield nucleoside 5'-phosphates.. Its function is as follows. Component of the 9-1-1 cell-cycle checkpoint response complex that plays a major role in DNA repair. The 9-1-1 complex is recruited to DNA lesion upon damage by the RAD17-replication factor C (RFC) clamp loader complex. Acts then as a sliding clamp platform on DNA for several proteins involved in long-patch base excision repair (LP-BER). The 9-1-1 complex stimulates DNA polymerase beta (POLB) activity by increasing its affinity for the 3'-OH end of the primer-template and stabilizes POLB to those sites where LP-BER proceeds; endonuclease FEN1 cleavage activity on substrates with double, nick, or gap flaps of distinct sequences and lengths; and DNA ligase I (LIG1) on long-patch base excision repair substrates. The 9-1-1 complex is necessary for the recruitment of RHNO1 to sites of double-stranded breaks (DSB) occurring during the S phase. RAD9A possesses 3'-&gt;5' double stranded DNA exonuclease activity. The protein is Cell cycle checkpoint control protein RAD9A (RAD9A) of Homo sapiens (Human).